Consider the following 1224-residue polypeptide: uncharacterized protein (1224 aa).

Disordered regions lie at residues 1 to 67 (MNQD…SSSI), 111 to 151 (QQSH…PPPL), 193 to 270 (QTEL…DPNI), 316 to 416 (DYNN…TVKK), 430 to 957 (SDSG…QEEK), and 1078 to 1167 (SFLP…TSHV). Residues 10-48 (SFHSNNNSNSNHHHSYNNSINSGSSSSGSNNSSNNNSFN) show a composition bias toward low complexity. Positions 49 to 58 (DEIEGGEIQE) are enriched in acidic residues. Low complexity-rich tracts occupy residues 126-140 (SSSS…SSSS), 193-212 (QTEL…SSPP), and 228-241 (SAPT…SVSS). Residues 242-255 (LTQPQKPKSVQYSQ) show a composition bias toward polar residues. A compositionally biased stretch (basic and acidic residues) spans 260 to 270 (EIREEKVDPNI). The segment covering 316–338 (DYNNSNSNNSNNNNNNNNSITEN) has biased composition (low complexity). Residues 341 to 353 (DKMINNQPSSTNS) show a composition bias toward polar residues. Composition is skewed to low complexity over residues 379 to 413 (TTTT…TTPT) and 430 to 450 (SDSG…TSTP). Composition is skewed to basic and acidic residues over residues 451-585 (KSKD…DKKK) and 630-646 (EIDK…KVES). Low complexity predominate over residues 662–719 (TTTTTTSTSSSSSLPSLSSSSSSLPLPSSSSSSSSSSSSSSSSSSSSSSSSSSSTTST). The span at 727-750 (PPPPPQQPPPPPPQQPPPPPPPIN) shows a compositional bias: pro residues. Over residues 755 to 892 (SEHDKKIIEK…SDRDRDRKDS (138 aa)) the composition is skewed to basic and acidic residues. Over residues 893 to 933 (NSNNNSNNNNNNNNNNNNNNNNNNNNKKDNNNNNNNNNNNN) the composition is skewed to low complexity. Residues 948 to 957 (TPKKTKQEEK) are compositionally biased toward basic and acidic residues. Positions 950-991 (KKTKQEEKLIRSQIDQIKEDAKDLKKLAKELQSKNQNECLEM) form a coiled coil. Composition is skewed to low complexity over residues 1078 to 1108 (SFLP…TAPL) and 1114 to 1165 (NPSE…PNTS).

This is an uncharacterized protein from Dictyostelium discoideum (Social amoeba).